The chain runs to 329 residues: Beta-ketoacyl-[acyl-carrier-protein] synthase III (329 aa).

Residues Cys-113 and His-255 contribute to the active site. Positions 256–260 are ACP-binding; the sequence is QANQR. The active site involves Asn-285.

This sequence belongs to the thiolase-like superfamily. FabH family. Homodimer.

The protein resides in the cytoplasm. The catalysed reaction is malonyl-[ACP] + acetyl-CoA + H(+) = 3-oxobutanoyl-[ACP] + CO2 + CoA. Its pathway is lipid metabolism; fatty acid biosynthesis. Functionally, catalyzes the condensation reaction of fatty acid synthesis by the addition to an acyl acceptor of two carbons from malonyl-ACP. Catalyzes the first condensation reaction which initiates fatty acid synthesis and may therefore play a role in governing the total rate of fatty acid production. Possesses both acetoacetyl-ACP synthase and acetyl transacylase activities. Its substrate specificity determines the biosynthesis of branched-chain and/or straight-chain of fatty acids. In Chlorobium chlorochromatii (strain CaD3), this protein is Beta-ketoacyl-[acyl-carrier-protein] synthase III.